We begin with the raw amino-acid sequence, 443 residues long: Xaa-Pro dipeptidase (443 aa).

The Mn(2+) site is built by aspartate 246, aspartate 257, histidine 339, glutamate 384, and glutamate 423.

Belongs to the peptidase M24B family. Bacterial-type prolidase subfamily. It depends on Mn(2+) as a cofactor.

The catalysed reaction is Xaa-L-Pro dipeptide + H2O = an L-alpha-amino acid + L-proline. In terms of biological role, splits dipeptides with a prolyl residue in the C-terminal position. This Shigella flexneri serotype 5b (strain 8401) protein is Xaa-Pro dipeptidase.